Reading from the N-terminus, the 129-residue chain is Phosphoribosyl-AMP cyclohydrolase (129 aa).

D85 provides a ligand contact to Mg(2+). Zn(2+) is bound at residue C86. Positions 87 and 89 each coordinate Mg(2+). Positions 102 and 109 each coordinate Zn(2+).

It belongs to the PRA-CH family. In terms of assembly, homodimer. Mg(2+) serves as cofactor. It depends on Zn(2+) as a cofactor.

The protein localises to the cytoplasm. The catalysed reaction is 1-(5-phospho-beta-D-ribosyl)-5'-AMP + H2O = 1-(5-phospho-beta-D-ribosyl)-5-[(5-phospho-beta-D-ribosylamino)methylideneamino]imidazole-4-carboxamide. It participates in amino-acid biosynthesis; L-histidine biosynthesis; L-histidine from 5-phospho-alpha-D-ribose 1-diphosphate: step 3/9. Catalyzes the hydrolysis of the adenine ring of phosphoribosyl-AMP. The polypeptide is Phosphoribosyl-AMP cyclohydrolase (hisI) (Methanococcus maripaludis (strain DSM 14266 / JCM 13030 / NBRC 101832 / S2 / LL)).